The following is a 1448-amino-acid chain: Murinoglobulin-2 (1448 aa).

The first 24 residues, 1–24 (MWKNREAQLCLFSVLLAFLPSASL), serve as a signal peptide directing secretion. Cystine bridges form between C48-C86, C245-C277, and C263-C289. N-linked (GlcNAc...) asparagine glycosylation is present at N55. Residues N295, N315, N387, and N502 are each glycosylated (N-linked (GlcNAc...) asparagine). 3 disulfides stabilise this stretch: C462-C556, C588-C748, and C636-C681. The interval 678 to 709 (PTYCYDLPKEPPRKDPPRKDPEPKDTVVETIR) is bait region. N-linked (GlcNAc...) asparagine glycans are attached at residues N751 and N846. 4 disulfides stabilise this stretch: C824–C860, C898–C1295, C1056–C1101, and C1326–C1441. The segment at residues 949–952 (CGEQ) is a cross-link (isoglutamyl cysteine thioester (Cys-Gln)). N968 carries an N-linked (GlcNAc...) asparagine glycan. N-linked (GlcNAc...) asparagine glycans are attached at residues N1114, N1285, and N1398.

This sequence belongs to the protease inhibitor I39 (alpha-2-macroglobulin) family. Monomer.

The protein localises to the secreted. Its function is as follows. A proteinase activates the inhibitor by specific proteolysis in the bait region, which, by an unknown mechanism leads to reaction at the cysteinyl-glutamyl internal thiol ester site and to a conformational change, whereby the proteinase is trapped and/or covalently bound to the inhibitor. While in the tetrameric proteinase inhibitors steric inhibition is sufficiently strong, monomeric forms need a covalent linkage between the activated glutamyl residue of the original thiol ester and a terminal amino group of a lysine or another nucleophilic group on the proteinase, for inhibition to be effective. This chain is Murinoglobulin-2, found in Rattus norvegicus (Rat).